Here is a 433-residue protein sequence, read N- to C-terminus: UDP-N-acetylglucosamine 1-carboxyvinyltransferase (433 aa).

34–35 provides a ligand contact to phosphoenolpyruvate; sequence KN. Arg-104 serves as a coordination point for UDP-N-acetyl-alpha-D-glucosamine. The Proton donor role is filled by Cys-128. Cys-128 carries the 2-(S-cysteinyl)pyruvic acid O-phosphothioketal modification. Residues Asp-320 and Ile-342 each contribute to the UDP-N-acetyl-alpha-D-glucosamine site.

It belongs to the EPSP synthase family. MurA subfamily.

It is found in the cytoplasm. It carries out the reaction phosphoenolpyruvate + UDP-N-acetyl-alpha-D-glucosamine = UDP-N-acetyl-3-O-(1-carboxyvinyl)-alpha-D-glucosamine + phosphate. Its pathway is cell wall biogenesis; peptidoglycan biosynthesis. In terms of biological role, cell wall formation. Adds enolpyruvyl to UDP-N-acetylglucosamine. The chain is UDP-N-acetylglucosamine 1-carboxyvinyltransferase from Parasynechococcus marenigrum (strain WH8102).